The chain runs to 144 residues: NADH dehydrogenase [ubiquinone] 1 alpha subcomplex subunit 13 (144 aa).

The residue at position 2 (Ala-2) is an N-acetylalanine. A helical membrane pass occupies residues 30-51 (LSGYSMFAVGIGALIFGYWRMM).

The protein belongs to the complex I NDUFA13 subunit family. Complex I is composed of 45 different subunits. Interacts with CARD15, but not with CARD4. Interacts with STAT3, but not with STAT1, STAT2 and STAT5A. Interacts with OLFM4.

The protein resides in the mitochondrion inner membrane. It localises to the nucleus. Its function is as follows. Accessory subunit of the mitochondrial membrane respiratory chain NADH dehydrogenase (Complex I), that is believed not to be involved in catalysis. Complex I functions in the transfer of electrons from NADH to the respiratory chain. The immediate electron acceptor for the enzyme is believed to be ubiquinone. Involved in the interferon/all-trans-retinoic acid (IFN/RA) induced cell death. This apoptotic activity is inhibited by interaction with viral IRF1. Prevents the transactivation of STAT3 target genes. May play a role in CARD15-mediated innate mucosal responses and serve to regulate intestinal epithelial cell responses to microbes. The polypeptide is NADH dehydrogenase [ubiquinone] 1 alpha subcomplex subunit 13 (Ndufa13) (Mus musculus (Mouse)).